The chain runs to 252 residues: Imidazole glycerol phosphate synthase subunit HisF (252 aa).

Residues Asp12 and Asp131 contribute to the active site.

Belongs to the HisA/HisF family. In terms of assembly, heterodimer of HisH and HisF.

It localises to the cytoplasm. The catalysed reaction is 5-[(5-phospho-1-deoxy-D-ribulos-1-ylimino)methylamino]-1-(5-phospho-beta-D-ribosyl)imidazole-4-carboxamide + L-glutamine = D-erythro-1-(imidazol-4-yl)glycerol 3-phosphate + 5-amino-1-(5-phospho-beta-D-ribosyl)imidazole-4-carboxamide + L-glutamate + H(+). The protein operates within amino-acid biosynthesis; L-histidine biosynthesis; L-histidine from 5-phospho-alpha-D-ribose 1-diphosphate: step 5/9. In terms of biological role, IGPS catalyzes the conversion of PRFAR and glutamine to IGP, AICAR and glutamate. The HisF subunit catalyzes the cyclization activity that produces IGP and AICAR from PRFAR using the ammonia provided by the HisH subunit. This is Imidazole glycerol phosphate synthase subunit HisF from Thermus thermophilus (strain ATCC 27634 / DSM 579 / HB8).